A 630-amino-acid polypeptide reads, in one-letter code: tRNA uridine 5-carboxymethylaminomethyl modification enzyme MnmG (630 aa).

13–18 (GGGHAG) provides a ligand contact to FAD. 273–287 (GPRYCPSIEDKVMRF) is a binding site for NAD(+).

The protein belongs to the MnmG family. As to quaternary structure, homodimer. Heterotetramer of two MnmE and two MnmG subunits. FAD serves as cofactor.

The protein localises to the cytoplasm. In terms of biological role, NAD-binding protein involved in the addition of a carboxymethylaminomethyl (cmnm) group at the wobble position (U34) of certain tRNAs, forming tRNA-cmnm(5)s(2)U34. This Actinobacillus pleuropneumoniae serotype 3 (strain JL03) protein is tRNA uridine 5-carboxymethylaminomethyl modification enzyme MnmG.